The chain runs to 588 residues: Outer membrane transporter CdiB (588 aa).

Residues 33 to 55 traverse the membrane as a helical segment; the sequence is VVRYFSLLPCLCILSFSSPAAML. A POTRA domain is found at 104-179; that stretch reads FTVSRIVVSG…GVLHITVMEG (76 aa).

Belongs to the TPS (TC 1.B.20) family.

Its subcellular location is the cell outer membrane. In terms of biological role, potential outer membrane protein component of a toxin-immunity protein module, which functions as a cellular contact-dependent growth inhibition (CDI) system. CDI modules allow bacteria to communicate with and inhibit the growth of closely related neighboring bacteria in a contact-dependent fashion. This protein may be required for secretion and assembly of the CdiA toxin protein. Probable member of a two partner secretion pathway (TPS) in which it mediates the secretion of CdiA. In Escherichia coli O6:K15:H31 (strain 536 / UPEC), this protein is Outer membrane transporter CdiB.